The chain runs to 276 residues: Phosphate import ATP-binding protein PstB (276 aa).

An ABC transporter domain is found at Val23–Ile271. Gly62–Ser69 contributes to the ATP binding site.

The protein belongs to the ABC transporter superfamily. Phosphate importer (TC 3.A.1.7) family. In terms of assembly, the complex is composed of two ATP-binding proteins (PstB), two transmembrane proteins (PstC and PstA) and a solute-binding protein (PstS).

The protein resides in the cell membrane. It catalyses the reaction phosphate(out) + ATP + H2O = ADP + 2 phosphate(in) + H(+). Part of the ABC transporter complex PstSACB involved in phosphate import. Responsible for energy coupling to the transport system. The chain is Phosphate import ATP-binding protein PstB from Oceanobacillus iheyensis (strain DSM 14371 / CIP 107618 / JCM 11309 / KCTC 3954 / HTE831).